The sequence spans 314 residues: 2-methoxy-6-polyprenyl-1,4-benzoquinol methylase, mitochondrial (314 aa).

Residues 1 to 19 (MLQSLNRSVRYLSTSIGSR) constitute a mitochondrion transit peptide. Residues Thr109, Asp154, 186 to 187 (NS), and Ser203 contribute to the S-adenosyl-L-methionine site.

The protein belongs to the class I-like SAM-binding methyltransferase superfamily. MenG/UbiE family. In terms of assembly, component of a multi-subunit COQ enzyme complex.

It is found in the mitochondrion inner membrane. The enzyme catalyses a 2-methoxy-6-(all-trans-polyprenyl)benzene-1,4-diol + S-adenosyl-L-methionine = a 5-methoxy-2-methyl-3-(all-trans-polyprenyl)benzene-1,4-diol + S-adenosyl-L-homocysteine + H(+). It functions in the pathway cofactor biosynthesis; ubiquinone biosynthesis. In terms of biological role, methyltransferase required for the conversion of 2-polyprenyl-6-methoxy-1,4-benzoquinol (DDMQH2) to 2-polyprenyl-3-methyl-6-methoxy-1,4-benzoquinol (DMQH2). The chain is 2-methoxy-6-polyprenyl-1,4-benzoquinol methylase, mitochondrial from Dictyostelium discoideum (Social amoeba).